We begin with the raw amino-acid sequence, 424 residues long: Histidine--tRNA ligase (424 aa).

Belongs to the class-II aminoacyl-tRNA synthetase family. Homodimer.

It is found in the cytoplasm. It carries out the reaction tRNA(His) + L-histidine + ATP = L-histidyl-tRNA(His) + AMP + diphosphate + H(+). The chain is Histidine--tRNA ligase from Yersinia pestis bv. Antiqua (strain Antiqua).